A 497-amino-acid polypeptide reads, in one-letter code: Guanosine-5'-triphosphate,3'-diphosphate pyrophosphatase (497 aa).

This sequence belongs to the GppA/Ppx family. GppA subfamily.

It carries out the reaction guanosine 3'-diphosphate 5'-triphosphate + H2O = guanosine 3',5'-bis(diphosphate) + phosphate + H(+). It participates in purine metabolism; ppGpp biosynthesis; ppGpp from GTP: step 2/2. Its function is as follows. Catalyzes the conversion of pppGpp to ppGpp. Guanosine pentaphosphate (pppGpp) is a cytoplasmic signaling molecule which together with ppGpp controls the 'stringent response', an adaptive process that allows bacteria to respond to amino acid starvation, resulting in the coordinated regulation of numerous cellular activities. The polypeptide is Guanosine-5'-triphosphate,3'-diphosphate pyrophosphatase (Aliivibrio fischeri (strain ATCC 700601 / ES114) (Vibrio fischeri)).